A 190-amino-acid polypeptide reads, in one-letter code: Xanthine phosphoribosyltransferase (190 aa).

2 residues coordinate xanthine: L20 and N27. 128 to 132 (ANGHA) provides a ligand contact to 5-phospho-alpha-D-ribose 1-diphosphate. A xanthine-binding site is contributed by K156.

The protein belongs to the purine/pyrimidine phosphoribosyltransferase family. Xpt subfamily. In terms of assembly, homodimer.

The protein localises to the cytoplasm. The catalysed reaction is XMP + diphosphate = xanthine + 5-phospho-alpha-D-ribose 1-diphosphate. It functions in the pathway purine metabolism; XMP biosynthesis via salvage pathway; XMP from xanthine: step 1/1. Converts the preformed base xanthine, a product of nucleic acid breakdown, to xanthosine 5'-monophosphate (XMP), so it can be reused for RNA or DNA synthesis. The sequence is that of Xanthine phosphoribosyltransferase from Pseudomonas aeruginosa (strain LESB58).